A 150-amino-acid chain; its full sequence is FAD synthase (150 aa).

ATP is bound by residues 10–11, 15–18, D97, and Y124; these read VF and HPGH.

It belongs to the archaeal FAD synthase family. Homodimer. The cofactor is a divalent metal cation.

It catalyses the reaction FMN + ATP + H(+) = FAD + diphosphate. It participates in cofactor biosynthesis; FAD biosynthesis; FAD from FMN: step 1/1. Catalyzes the transfer of the AMP portion of ATP to flavin mononucleotide (FMN) to produce flavin adenine dinucleotide (FAD) coenzyme. This chain is FAD synthase, found in Methanopyrus kandleri (strain AV19 / DSM 6324 / JCM 9639 / NBRC 100938).